We begin with the raw amino-acid sequence, 299 residues long: Regucalcin (299 aa).

E18 provides a ligand contact to a divalent metal cation. Substrate is bound by residues R101, N103, and E121. Residues N154 and D204 each coordinate a divalent metal cation. D204 (proton donor/acceptor) is an active-site residue. N6-succinyllysine is present on residues K244 and K253.

The protein belongs to the SMP-30/CGR1 family. Monomer. Requires Zn(2+) as cofactor. Mn(2+) is required as a cofactor. It depends on Ca(2+) as a cofactor. Mg(2+) serves as cofactor.

It localises to the cytoplasm. The enzyme catalyses D-glucono-1,5-lactone + H2O = D-gluconate + H(+). It participates in cofactor biosynthesis; L-ascorbate biosynthesis via UDP-alpha-D-glucuronate pathway; L-ascorbate from UDP-alpha-D-glucuronate: step 3/4. In terms of biological role, gluconolactonase with low activity towards other sugar lactones, including gulonolactone and galactonolactone. Catalyzes a key step in ascorbic acid (vitamin C) biosynthesis. Can also hydrolyze diisopropyl phosphorofluoridate and phenylacetate (in vitro). Calcium-binding protein. Modulates Ca(2+) signaling, and Ca(2+)-dependent cellular processes and enzyme activities. The polypeptide is Regucalcin (RGN) (Sus scrofa (Pig)).